The sequence spans 553 residues: MKNINPINTNAWNSLQQHFNNIKEVKIRDLFLLDSQRFDNFSAIFDNQILLDYSKNRITTETLYLLFALAKECDLPNAIAAMFSGQKINRTEDRAVLHIALRNRSNKIIAIDSQDIMPEVNAVLSKMRQFCNQIISGQWKGYTGKPITNIVNIGIGGSDLGPYMVTEALRPYKNHLNMHFVSNVDGTHITEKFKYLDPETTLFLIASKTFTTQETMTNAHSARNWFLKTAVNEQYIAQHFVAISTNANDVVKFGININNMFQFWDWVGGRYSLWSAIGLSIALSLGFENFELLLEGAHAMDCHFTETQLEHNLPVILALINIWYNNFFGFETEAIIPYDQYMHRFAAYLQQCHMESNGKSIDRNGNIINYQTGSIIWGEPGTNSQHSFYQLLHQGTKIVPCDFIVPAISHNPLGDHHLKLLANCFAQTEALAFGKSCQFIEEKFIMGTTSEQKLSIIPFKVCGGNRPTNSILVKQITPYNLGALISLYEHKIFTQSVILNIYAFDQWGVELGKTQANSVLSELATDNIVTCHNSSTNGLINYYKSWRYKTDDK.

The active-site Proton donor is the Glu-355. Active-site residues include His-386 and Lys-513.

This sequence belongs to the GPI family.

It localises to the cytoplasm. The enzyme catalyses alpha-D-glucose 6-phosphate = beta-D-fructose 6-phosphate. Its pathway is carbohydrate biosynthesis; gluconeogenesis. It participates in carbohydrate degradation; glycolysis; D-glyceraldehyde 3-phosphate and glycerone phosphate from D-glucose: step 2/4. Its function is as follows. Catalyzes the reversible isomerization of glucose-6-phosphate to fructose-6-phosphate. In Baumannia cicadellinicola subsp. Homalodisca coagulata, this protein is Glucose-6-phosphate isomerase.